Reading from the N-terminus, the 141-residue chain is Large ribosomal subunit protein uL11 (141 aa).

This sequence belongs to the universal ribosomal protein uL11 family. Part of the ribosomal stalk of the 50S ribosomal subunit. Interacts with L10 and the large rRNA to form the base of the stalk. L10 forms an elongated spine to which L12 dimers bind in a sequential fashion forming a multimeric L10(L12)X complex. In terms of processing, one or more lysine residues are methylated.

Functionally, forms part of the ribosomal stalk which helps the ribosome interact with GTP-bound translation factors. The polypeptide is Large ribosomal subunit protein uL11 (Thermotoga neapolitana (strain ATCC 49049 / DSM 4359 / NBRC 107923 / NS-E)).